The primary structure comprises 622 residues: Serine/threonine-protein kinase PknB (622 aa).

Residues 1–328 (MTTPPHLSDR…TESDGSIGRW (328 aa)) are Cytoplasmic-facing. A Protein kinase domain is found at 11–273 (YELGDILGFG…TAAEMRADLI (263 aa)). Residues 17-25 (LGFGGMSEV), Lys40, and 93-95 (EYV) contribute to the ATP site. Residue Asp138 is the Proton acceptor of the active site. ATP contacts are provided by residues 140–143 (KPAN) and Asp156. Residues Asn143 and Asp156 each contribute to the Mg(2+) site. Phosphoserine; by autocatalysis is present on residues Ser166 and Ser168. Phosphothreonine; by autocatalysis occurs at positions 170, 172, and 308. A helical membrane pass occupies residues 329–349 (VAVVAVLAVLTIAIVAAFNTF). At 350–622 (GGNTRDVQVP…DGIITLKFGQ (273 aa)) the chain is on the extracellular side. PASTA domains lie at 352 to 418 (NTRD…NVST), 419 to 486 (GPEQ…IVGS), 487 to 553 (GPET…QVSK), and 554 to 622 (GNQF…KFGQ). The segment at 381-404 (RTLQKPDSTIPPDHVISTEPGANA) is disordered.

Belongs to the protein kinase superfamily. Ser/Thr protein kinase family. As to quaternary structure, homodimer. Post-translationally, autophosphorylated. Dephosphorylated by PstP.

The protein localises to the cell membrane. It carries out the reaction L-seryl-[protein] + ATP = O-phospho-L-seryl-[protein] + ADP + H(+). It catalyses the reaction L-threonyl-[protein] + ATP = O-phospho-L-threonyl-[protein] + ADP + H(+). Protein kinase that regulates many aspects of mycobacterial physiology. Is a key component of a signal transduction pathway that regulates cell growth, cell shape and cell division via phosphorylation of target proteins. In Mycobacterium leprae (strain TN), this protein is Serine/threonine-protein kinase PknB (pknB).